The chain runs to 432 residues: Adenylosuccinate synthetase (432 aa).

Residues 12–18 (GDEGKGK) and 40–42 (GHT) each bind GTP. The Proton acceptor role is filled by Asp13. Residues Asp13 and Gly40 each contribute to the Mg(2+) site. Residues 13–16 (DEGK), 38–41 (NAGH), Thr132, Arg146, Gln226, Thr241, and Arg305 contribute to the IMP site. The active-site Proton donor is the His41. Residue 301–307 (TVTGRKR) coordinates substrate. Residues Arg307, 333 to 335 (KLD), and 415 to 417 (STS) contribute to the GTP site.

This sequence belongs to the adenylosuccinate synthetase family. As to quaternary structure, homodimer. It depends on Mg(2+) as a cofactor.

It localises to the cytoplasm. The catalysed reaction is IMP + L-aspartate + GTP = N(6)-(1,2-dicarboxyethyl)-AMP + GDP + phosphate + 2 H(+). Its pathway is purine metabolism; AMP biosynthesis via de novo pathway; AMP from IMP: step 1/2. In terms of biological role, plays an important role in the de novo pathway of purine nucleotide biosynthesis. Catalyzes the first committed step in the biosynthesis of AMP from IMP. The chain is Adenylosuccinate synthetase from Chelativorans sp. (strain BNC1).